The following is a 215-amino-acid chain: MKALLLGAPGAGKGTQAQFITAAFGIPQISTGDMLRAAIKAGTPLGLEAKKIIDEGGLVRDDIIIGMVKERIAQDDCKNGFLFDGFPRTLAQAEAMVEAGVDLDAVVEIDVPDSVIVDRMSGRRVHLASGRTYHVTYNPPKVEGKDDVTGEDLIQRDDDKEETVKKRLAVYHEQTEVLVDFYSKLEGEHAPKYIKVDGTQPVEAVKAEVLGALGK.

10-15 (GAGKGT) is an ATP binding site. Residues 30–59 (STGDMLRAAIKAGTPLGLEAKKIIDEGGLV) form an NMP region. AMP contacts are provided by residues T31, R36, 57–59 (GLV), 85–88 (GFPR), and Q92. The tract at residues 122 to 159 (GRRVHLASGRTYHVTYNPPKVEGKDDVTGEDLIQRDDD) is LID. Residues R123 and 132–133 (TY) each bind ATP. AMP-binding residues include R156 and R167. Residue Q200 coordinates ATP.

This sequence belongs to the adenylate kinase family. Monomer.

Its subcellular location is the cytoplasm. The enzyme catalyses AMP + ATP = 2 ADP. It functions in the pathway purine metabolism; AMP biosynthesis via salvage pathway; AMP from ADP: step 1/1. Its function is as follows. Catalyzes the reversible transfer of the terminal phosphate group between ATP and AMP. Plays an important role in cellular energy homeostasis and in adenine nucleotide metabolism. In Neisseria meningitidis serogroup C (strain 053442), this protein is Adenylate kinase.